Consider the following 80-residue polypeptide: CDC42 small effector protein 1 (80 aa).

S-palmitoyl cysteine attachment occurs at residues C10 and C11. In terms of domain architecture, CRIB spans 30-43 (IGEPMNFVHLTHIG). The disordered stretch occupies residues 48–80 (GAGDGLAMTGAVQEQMRSKGNHRDRPWSNSRAL).

This sequence belongs to the CDC42SE/SPEC family. In terms of assembly, interacts with CDC42 (in GTP-bound form). Interacts weakly with RAC1 and not at all with RHOA.

It is found in the cytoplasm. Its subcellular location is the cytoskeleton. It localises to the cell membrane. In terms of biological role, probably involved in the organization of the actin cytoskeleton by acting downstream of CDC42, inducing actin filament assembly. Alters CDC42-induced cell shape changes. In activated T-cells, may play a role in CDC42-mediated F-actin accumulation at the immunological synapse. May play a role in early contractile events in phagocytosis in macrophages. The polypeptide is CDC42 small effector protein 1 (Cdc42se1) (Mus musculus (Mouse)).